We begin with the raw amino-acid sequence, 170 residues long: Crossover junction endodeoxyribonuclease RuvC (170 aa).

Residues D9, E70, and D145 contribute to the active site. The Mg(2+) site is built by D9, E70, and D145.

The protein belongs to the RuvC family. In terms of assembly, homodimer which binds Holliday junction (HJ) DNA. The HJ becomes 2-fold symmetrical on binding to RuvC with unstacked arms; it has a different conformation from HJ DNA in complex with RuvA. In the full resolvosome a probable DNA-RuvA(4)-RuvB(12)-RuvC(2) complex forms which resolves the HJ. The cofactor is Mg(2+).

Its subcellular location is the cytoplasm. The catalysed reaction is Endonucleolytic cleavage at a junction such as a reciprocal single-stranded crossover between two homologous DNA duplexes (Holliday junction).. The RuvA-RuvB-RuvC complex processes Holliday junction (HJ) DNA during genetic recombination and DNA repair. Endonuclease that resolves HJ intermediates. Cleaves cruciform DNA by making single-stranded nicks across the HJ at symmetrical positions within the homologous arms, yielding a 5'-phosphate and a 3'-hydroxyl group; requires a central core of homology in the junction. The consensus cleavage sequence is 5'-(A/T)TT(C/G)-3'. Cleavage occurs on the 3'-side of the TT dinucleotide at the point of strand exchange. HJ branch migration catalyzed by RuvA-RuvB allows RuvC to scan DNA until it finds its consensus sequence, where it cleaves and resolves the cruciform DNA. The polypeptide is Crossover junction endodeoxyribonuclease RuvC (Chlamydia muridarum (strain MoPn / Nigg)).